A 142-amino-acid chain; its full sequence is Large ribosomal subunit protein uL13 (142 aa).

This sequence belongs to the universal ribosomal protein uL13 family. As to quaternary structure, part of the 50S ribosomal subunit.

This protein is one of the early assembly proteins of the 50S ribosomal subunit, although it is not seen to bind rRNA by itself. It is important during the early stages of 50S assembly. The chain is Large ribosomal subunit protein uL13 from Sodalis glossinidius (strain morsitans).